Here is a 164-residue protein sequence, read N- to C-terminus: Ferritin heavy chain (164 aa).

Residues 1–141 (AINRQINLEL…DHVTNLRKMG (141 aa)) form the Ferritin-like diiron domain. Positions 9, 44, 47, 89, and 123 each coordinate Fe cation. 2 positions are modified to phosphoserine: serine 160 and serine 164.

This sequence belongs to the ferritin family. As to quaternary structure, oligomer of 24 subunits. There are two types of subunits: L (light) chain and H (heavy) chain. The major chain can be light or heavy, depending on the species and tissue type. The functional molecule forms a roughly spherical shell with a diameter of 12 nm and contains a central cavity into which the insoluble mineral iron core is deposited. Interacts with NCOA4; NCOA4 promotes targeting of the iron-binding ferritin complex to autolysosomes following starvation or iron depletion.

It localises to the cytoplasm. It is found in the lysosome. Its subcellular location is the cytoplasmic vesicle. The protein localises to the autophagosome. The enzyme catalyses 4 Fe(2+) + O2 + 4 H(+) = 4 Fe(3+) + 2 H2O. In terms of biological role, stores iron in a soluble, non-toxic, readily available form. Important for iron homeostasis. Has ferroxidase activity. Iron is taken up in the ferrous form and deposited as ferric hydroxides after oxidation. Also plays a role in delivery of iron to cells. Mediates iron uptake in capsule cells of the developing kidney. Delivery to lysosomes is mediated by the cargo receptor NCOA4 for autophagic degradation and release of iron. This chain is Ferritin heavy chain (FTH1), found in Oryctolagus cuniculus (Rabbit).